The sequence spans 430 residues: Enolase (430 aa).

Gln-164 lines the (2R)-2-phosphoglycerate pocket. The Proton donor role is filled by Glu-208. The Mg(2+) site is built by Asp-245, Glu-288, and Asp-315. Lys-340, Arg-369, Ser-370, and Lys-391 together coordinate (2R)-2-phosphoglycerate. Catalysis depends on Lys-340, which acts as the Proton acceptor.

Belongs to the enolase family. The cofactor is Mg(2+).

The protein resides in the cytoplasm. The protein localises to the secreted. It localises to the cell surface. It catalyses the reaction (2R)-2-phosphoglycerate = phosphoenolpyruvate + H2O. It functions in the pathway carbohydrate degradation; glycolysis; pyruvate from D-glyceraldehyde 3-phosphate: step 4/5. In terms of biological role, catalyzes the reversible conversion of 2-phosphoglycerate (2-PG) into phosphoenolpyruvate (PEP). It is essential for the degradation of carbohydrates via glycolysis. The chain is Enolase from Pyrococcus furiosus (strain ATCC 43587 / DSM 3638 / JCM 8422 / Vc1).